A 316-amino-acid chain; its full sequence is E3 ubiquitin-protein ligase rnf146 (316 aa).

The RING-type zinc-finger motif lies at 36-74 (CAICLQTCVHPVSLPCKHIFCYLCVKGASWLGRRCALCR). The WWE domain maps to 91-167 (EELKSASRGN…EHGRRRKIKR (77 aa)). Residues tyrosine 107, arginine 110, tryptophan 114, tyrosine 144, glutamine 153, arginine 163, and lysine 175 each contribute to the a glycoprotein site. The disordered stretch occupies residues 257 to 316 (GRNNIGEGEEGQPLINARMPAPSALLEESEPSDSNDHGSPTLQHNSLLVPQSNRLPFGNP). Residues 293-310 (HGSPTLQHNSLLVPQSNR) are compositionally biased toward polar residues.

The protein resides in the cytoplasm. The protein localises to the cytosol. It is found in the nucleus. The catalysed reaction is S-ubiquitinyl-[E2 ubiquitin-conjugating enzyme]-L-cysteine + [acceptor protein]-L-lysine = [E2 ubiquitin-conjugating enzyme]-L-cysteine + N(6)-ubiquitinyl-[acceptor protein]-L-lysine.. Its pathway is protein modification; protein ubiquitination. In terms of biological role, E3 ubiquitin-protein ligase that specifically binds poly-ADP-ribosylated proteins and mediates their ubiquitination and subsequent degradation. May regulate many important biological processes, such as cell survival and DNA damage response. Acts as an activator of the Wnt signaling pathway by mediating the ubiquitination of poly-ADP-ribosylated proteins. Neuroprotective protein. Protects against cell death induced by DNA damaging agents and rescues cells from G1 arrest. Promotes cell survival after gamma-irradiation. Facilitates DNA repair. This is E3 ubiquitin-protein ligase rnf146 (rnf146) from Xenopus tropicalis (Western clawed frog).